Reading from the N-terminus, the 837-residue chain is Tuftelin-interacting protein 11 (837 aa).

Basic and acidic residues-rich tracts occupy residues 1–13 (MSLSHLYRDGEGR) and 50–64 (TYGVWAEHDSDDERP). 2 disordered regions span residues 1–21 (MSLSHLYRDGEGRVDDDDDER) and 50–136 (TYGV…AGGT). The segment at 1–50 (MSLSHLYRDGEGRVDDDDDERENFEITDWDLQNEFNPNRQRHWQTKEEAT) is required for interaction with DHX15. A phosphoserine mark is found at Ser-2, Ser-59, and Ser-98. Over residues 91–102 (EEAELDDSEDEE) the composition is skewed to acidic residues. Residues 103-116 (KPGKQEELPKDLGP) are compositionally biased toward basic and acidic residues. A Phosphoserine modification is found at Ser-144. The 47-residue stretch at 149–195 (TKGIGQKLLQKMGYVPGRGLGKNAQGIINPIEAKQRKGKGAVGAYGS) folds into the G-patch domain. The disordered stretch occupies residues 183-236 (QRKGKGAVGAYGSERTTQSLQDFPVVDSEEEAEEEFQKELSQWRKDPSGSKKKP). A Phosphoserine modification is found at Ser-210. The segment covering 217 to 231 (EFQKELSQWRKDPSG) has biased composition (basic and acidic residues). The Nuclear localization signal motif lies at 700-705 (VKDKFN). Residues 710–734 (IMNRAVSSNVGAYMQPGARENIAYL) are required for nuclear speckle localization.

Belongs to the TFP11/STIP family. As to quaternary structure, identified in the spliceosome C complex. Found in the Intron Large (IL) complex, a post-mRNA release spliceosomal complex containing the excised intron, U2, U5 and U6 snRNPs, and splicing factors. Interacts with TUFT1. Interacts with DHX15; indicative for a recruitment of DHX15 to the IL complex. Interacts with GCFC2.

It is found in the cytoplasm. It localises to the nucleus. Involved in pre-mRNA splicing, specifically in spliceosome disassembly during late-stage splicing events. Intron turnover seems to proceed through reactions in two lariat-intron associated complexes termed Intron Large (IL) and Intron Small (IS). In cooperation with DHX15 seems to mediate the transition of the U2, U5 and U6 snRNP-containing IL complex to the snRNP-free IS complex leading to efficient debranching and turnover of excised introns. May play a role in the differentiation of ameloblasts and odontoblasts or in the forming of the enamel extracellular matrix. This Oryctolagus cuniculus (Rabbit) protein is Tuftelin-interacting protein 11 (TFIP11).